The chain runs to 453 residues: Chromosomal replication initiator protein DnaA (453 aa).

Residues 1 to 74 (MKEKQFWNRI…GFEIYDAEIT (74 aa)) are domain I, interacts with DnaA modulators. Positions 74-113 (TPHYIFTKPQDTTSSQVEEATNLTLYDYSPKLVSIPYSDT) are domain II. A domain III, AAA+ region region spans residues 114–331 (GLKEKYTFDN…GAINDITLIA (218 aa)). The ATP site is built by Gly-158, Gly-160, Lys-161, and Thr-162. Residues 332 to 453 (RVKKIKDITI…EIESIKKKIK (122 aa)) are domain IV, binds dsDNA.

This sequence belongs to the DnaA family. Oligomerizes as a right-handed, spiral filament on DNA at oriC.

It localises to the cytoplasm. In terms of biological role, plays an essential role in the initiation and regulation of chromosomal replication. ATP-DnaA binds to the origin of replication (oriC) to initiate formation of the DNA replication initiation complex once per cell cycle. Binds the DnaA box (a 9 base pair repeat at the origin) and separates the double-stranded (ds)DNA. Forms a right-handed helical filament on oriC DNA; dsDNA binds to the exterior of the filament while single-stranded (ss)DNA is stabiized in the filament's interior. The ATP-DnaA-oriC complex binds and stabilizes one strand of the AT-rich DNA unwinding element (DUE), permitting loading of DNA polymerase. After initiation quickly degrades to an ADP-DnaA complex that is not apt for DNA replication. Binds acidic phospholipids. The sequence is that of Chromosomal replication initiator protein DnaA from Streptococcus pneumoniae (strain P1031).